We begin with the raw amino-acid sequence, 437 residues long: Phosphomethylpyrimidine synthase (437 aa).

Substrate contacts are provided by residues N69, M98, Y127, H163, 185-187, 226-229, and E265; these read SRG and DACR. Position 269 (H269) interacts with Zn(2+). A substrate-binding site is contributed by Y292. H333 is a Zn(2+) binding site. Residues C409, C412, and C416 each coordinate [4Fe-4S] cluster.

Belongs to the ThiC family. Requires [4Fe-4S] cluster as cofactor.

It catalyses the reaction 5-amino-1-(5-phospho-beta-D-ribosyl)imidazole + S-adenosyl-L-methionine = 4-amino-2-methyl-5-(phosphooxymethyl)pyrimidine + CO + 5'-deoxyadenosine + formate + L-methionine + 3 H(+). It participates in cofactor biosynthesis; thiamine diphosphate biosynthesis. Functionally, catalyzes the synthesis of the hydroxymethylpyrimidine phosphate (HMP-P) moiety of thiamine from aminoimidazole ribotide (AIR) in a radical S-adenosyl-L-methionine (SAM)-dependent reaction. In Clostridium botulinum (strain Loch Maree / Type A3), this protein is Phosphomethylpyrimidine synthase.